Reading from the N-terminus, the 241-residue chain is MNVITCRHYEELSEKAASIIAETVKQKPDAVLGLATGGTPEGVYKELVRMHRSEGLSFRNVTTINLDEYAGLSPEDKNSYHYYMNTHFFAHIDSRKDRHFLPDGRADDLDAECGRYDRLIQTLGGADIQLLGIGHNGHIGFNEPGTPFESRTHVVELNEETRQANARYFPSIDQVPVKALTMGIGTILSGKRILIMASGKSKAQAVKQLLDGRISEAFPASALHAHPDVTVLIDEKAAGGD.

D67 (proton acceptor; for enolization step) is an active-site residue. Residue N136 is the For ring-opening step of the active site. Residue H138 is the Proton acceptor; for ring-opening step of the active site. E143 serves as the catalytic For ring-opening step.

It belongs to the glucosamine/galactosamine-6-phosphate isomerase family. NagB subfamily.

The enzyme catalyses alpha-D-glucosamine 6-phosphate + H2O = beta-D-fructose 6-phosphate + NH4(+). It participates in amino-sugar metabolism; N-acetylneuraminate degradation; D-fructose 6-phosphate from N-acetylneuraminate: step 5/5. Functionally, catalyzes the reversible isomerization-deamination of glucosamine 6-phosphate (GlcN6P) to form fructose 6-phosphate (Fru6P) and ammonium ion. In Bacillus velezensis (strain DSM 23117 / BGSC 10A6 / LMG 26770 / FZB42) (Bacillus amyloliquefaciens subsp. plantarum), this protein is Glucosamine-6-phosphate deaminase.